Here is a 193-residue protein sequence, read N- to C-terminus: Putative 3-methyladenine DNA glycosylase (193 aa).

It belongs to the DNA glycosylase MPG family.

The chain is Putative 3-methyladenine DNA glycosylase from Francisella tularensis subsp. tularensis (strain FSC 198).